Reading from the N-terminus, the 253-residue chain is uncharacterized protein (253 aa).

10–35 (ISGAASKRGIGRATAELFASHGARVA) contributes to the NADP(+) binding site. Position 144 (Ser144) interacts with substrate. Catalysis depends on Tyr159, which acts as the Proton acceptor.

The protein belongs to the short-chain dehydrogenases/reductases (SDR) family.

This is an uncharacterized protein from Sinorhizobium fredii (strain NBRC 101917 / NGR234).